The primary structure comprises 75 residues: Supwaprin-a (75 aa).

Positions 1–24 (MSSGGLLLLLGFLTLWAELTPVSG) are cleaved as a signal peptide. A WAP domain is found at 27 to 72 (RPKKPGLCPPRPQKPPCVRECKNDWSCPGEQKCCRYGCIFECRDPI). Cystine bridges form between Cys-34/Cys-60, Cys-43/Cys-64, Cys-47/Cys-59, and Cys-53/Cys-68.

This sequence belongs to the venom waprin family. In terms of tissue distribution, expressed by the venom gland.

It is found in the secreted. Its function is as follows. Damages membranes of susceptible bacteria. Has no hemolytic activity. Not toxic to mice. Does not inhibit the proteinases elastase and cathepsin G. The polypeptide is Supwaprin-a (Austrelaps superbus (Lowland copperhead snake)).